The primary structure comprises 1160 residues: AF4/FMR2 family member 4 (1160 aa).

Basic and acidic residues predominate over residues 1 to 19 (MNREDRNVLRMKERERRNQ). Disordered regions lie at residues 1–42 (MNRE…YKVT), 78–289 (PKPA…SKAH), 322–908 (WPPP…FDDR), and 1031–1070 (NSYSNSQAPSPGLGSKAVGMPSPVSPKLSPGNSGSYSSGG). Over residues 115 to 128 (PSTSQSQKRSSALQ) the composition is skewed to polar residues. A Phosphoserine modification is found at serine 120. A compositionally biased stretch (low complexity) spans 172 to 189 (RSSSPGKPQAVSSLSSSH). A compositionally biased stretch (basic and acidic residues) spans 193–212 (HGNDHHSKEHQRSKSPRDPD). Serine 207 bears the Phosphoserine mark. Residues 229-247 (SSQSFPPSLMSKSSSMLQK) are compositionally biased toward low complexity. 2 stretches are compositionally biased toward polar residues: residues 268–280 (EHYSSQSHGNSMT) and 360–370 (YSTAKTSNGHQ). A phosphoserine mark is found at serine 382, serine 383, serine 384, and serine 387. The segment covering 398–407 (PRSTPGSNSE) has biased composition (polar residues). The segment covering 408–424 (PSHHNSEGADNSRDDSS) has biased composition (basic and acidic residues). Residues 425 to 457 (SHSGSESSSGSDSESESSSSDSEANEPSQSASP) are compositionally biased toward low complexity. A phosphoserine mark is found at serine 482, serine 485, and serine 486. 3 stretches are compositionally biased toward polar residues: residues 483-496 (PASSVDSNIPSSQA), 505-523 (GTASNYTDPGGTKETSSAT), and 544-555 (SPAQSDSTTQRR). Serine 544 is modified (phosphoserine). The segment covering 563-581 (KKPEKSAAEEPRGGLKIES) has biased composition (basic and acidic residues). Lysine 578 participates in a covalent cross-link: Glycyl lysine isopeptide (Lys-Gly) (interchain with G-Cter in SUMO2). Positions 594–607 (SRHKAATKGSRKPN) are enriched in basic residues. Residues 608–622 (IKKESKSSPRPTAEK) show a composition bias toward basic and acidic residues. Positions 641–657 (TDTSSSDSDGSESLPPS) are enriched in low complexity. Phosphoserine is present on serine 666. Threonine 669 carries the phosphothreonine modification. Residues serine 675, serine 689, serine 698, and serine 701 each carry the phosphoserine modification. The residue at position 707 (tyrosine 707) is a Phosphotyrosine. Basic and acidic residues-rich tracts occupy residues 725-756 (PYKETEPPKGEKKNVPEKHSREVQKQASEKAS), 764-784 (KNDDDTRASESKKPKTEDKNS), and 794-806 (ESSKQSSTKEKDL). Serine 809 carries the phosphoserine modification. Lysine 817 is modified (N6-acetyllysine). Serine 831 bears the Phosphoserine mark. Composition is skewed to low complexity over residues 831–859 (SQSSSLKSSGTSSKENSGSSSKSSSSSTA) and 880–895 (PNSSSNCPPSTPTSES). Phosphoserine is present on residues serine 1040, serine 1052, serine 1055, and serine 1059. Residues 1059–1070 (SPGNSGSYSSGG) are compositionally biased toward low complexity.

Belongs to the AF4 family. As to quaternary structure, component of the super elongation complex (SEC), at least composed of EAF1, EAF2, CDK9, MLLT3/AF9, AFF (AFF1 or AFF4), the P-TEFb complex and ELL (ELL, ELL2 or ELL3). Interacts with ELL2; the interaction is direct and leads to stabilize ELL2 and prevent ELL2 ubiquitination and degradation. Interacts with ELL3; the interaction is direct. Dephosphorylated at Ser-544 by the PNUTS-PP1 complex, promoting RNA polymerase II transcription pause-release. As to expression, highly expressed in testis by Sertoli cells, and at low levels in other tissues.

It localises to the nucleus. The protein localises to the chromosome. In terms of biological role, key component of the super elongation complex (SEC), a complex required to increase the catalytic rate of RNA polymerase II transcription by suppressing transient pausing by the polymerase at multiple sites along the DNA. In the SEC complex, AFF4 acts as a central scaffold that recruits other factors through direct interactions with ELL proteins (ELL, ELL2 or ELL3) and the P-TEFb complex. The protein is AF4/FMR2 family member 4 (Aff4) of Mus musculus (Mouse).